Reading from the N-terminus, the 167-residue chain is Small ribosomal subunit protein uS5 (167 aa).

The S5 DRBM domain maps to 12-75; sequence LQEKLIAVNR…EKARRNMVTV (64 aa).

The protein belongs to the universal ribosomal protein uS5 family. As to quaternary structure, part of the 30S ribosomal subunit. Contacts proteins S4 and S8.

In terms of biological role, with S4 and S12 plays an important role in translational accuracy. Located at the back of the 30S subunit body where it stabilizes the conformation of the head with respect to the body. The sequence is that of Small ribosomal subunit protein uS5 from Shewanella oneidensis (strain ATCC 700550 / JCM 31522 / CIP 106686 / LMG 19005 / NCIMB 14063 / MR-1).